We begin with the raw amino-acid sequence, 65 residues long: uncharacterized protein (65 aa).

The tract at residues 1-22 (MEKETPQQETKQSTNKESGFFD) is disordered. The segment covering 7 to 17 (QQETKQSTNKE) has biased composition (polar residues). Residues 22 to 65 (DEIIKRTNQLLEKEKELHEKYNKEITSQQDQIDQLKKKINQLKY) are a coiled coil.

This is an uncharacterized protein from Dictyostelium discoideum (Social amoeba).